A 517-amino-acid polypeptide reads, in one-letter code: T-complex protein 11-like protein 2 (517 aa).

The tract at residues 1–59 (MPFNGEKQCVSEDQQSDSESSRFAEGVASLSDYECSRQSFTSDSSSKSSSPASTSPPRG) is disordered. S16 is modified (phosphoserine). The segment covering 36–55 (SRQSFTSDSSSKSSSPASTS) has biased composition (low complexity).

It belongs to the TCP11 family. As to quaternary structure, interacts with FMNL2; this interaction promotes muscle-derived satellite cell (MDSC) migration and differentiation.

It is found in the cytoplasm. It localises to the cytoskeleton. In terms of biological role, promotes the migration of muscle-derived satellite cells (MDSCs) during differentiation throught interaction with FMNL2 and therefore may participate in microfilament assembly. This chain is T-complex protein 11-like protein 2, found in Mus musculus (Mouse).